The sequence spans 198 residues: UPF0548 protein DR_2035 (198 aa).

It belongs to the UPF0548 family.

The sequence is that of UPF0548 protein DR_2035 from Deinococcus radiodurans (strain ATCC 13939 / DSM 20539 / JCM 16871 / CCUG 27074 / LMG 4051 / NBRC 15346 / NCIMB 9279 / VKM B-1422 / R1).